The chain runs to 258 residues: MKIQKIEKKKRLYLLECDNGDSLYVTEDTIVHFMLSKGMEISPEQLESIKQFAQFSYGKNLALYYISFQVRTQKQVYDYLKKHDLENTIIQKIIEELIKENWINDQKYVESFLRQNMTNGDKGPQLIKQKLMQKGISDKIIEKAISEVDFYPIAEKAALKMISRYQDKLPRKALQDKLTQLLINKGFSYDLVKAVNGNLSIETDQENTLDLLEKEADKQLRKLSKRYEGYALRQKLFQALYRKGYDSDDIQSLLSEIL.

It belongs to the RecX family.

Its subcellular location is the cytoplasm. Its function is as follows. Modulates RecA activity. The protein is Regulatory protein RecX of Streptococcus uberis (strain ATCC BAA-854 / 0140J).